Reading from the N-terminus, the 227-residue chain is MSIIVALDAKSQYDALKIVEQLDPTLCRVKVGKELFTHEGPSVVKKLQEENFEVFLDLKFHDIPNTTAQAVCAAADLGVWMVNVHASGGRKMMETCVERLKAGNYQTQLIAVTVLTSMGREDLKDIGLDIEPVEQVKRLAKLTKESGLDGVVCSAQEAKILRELIGQDFSLVTPGIRPEGSNADDQKRIVTPKQAMLDGSTHLVIGRPITNAENPTEMLKSILASIA.

Residues aspartate 8, lysine 30, 57–66 (DLKFHDIPNT), threonine 116, arginine 177, glutamine 186, glycine 206, and arginine 207 each bind substrate. Residue lysine 59 is the Proton donor of the active site.

The protein belongs to the OMP decarboxylase family. Type 1 subfamily. As to quaternary structure, homodimer.

It catalyses the reaction orotidine 5'-phosphate + H(+) = UMP + CO2. The protein operates within pyrimidine metabolism; UMP biosynthesis via de novo pathway; UMP from orotate: step 2/2. Catalyzes the decarboxylation of orotidine 5'-monophosphate (OMP) to uridine 5'-monophosphate (UMP). In Acinetobacter baumannii (strain AB307-0294), this protein is Orotidine 5'-phosphate decarboxylase.